Consider the following 817-residue polypeptide: DNA replication licensing factor Mcm6 (817 aa).

The C4-type zinc-finger motif lies at 152–179 (CLDCQTEIRNVEQQFKFTNPTICRNPVC). The 207-residue stretch at 338-544 (LYQNLISSLF…VVDYAIARKI (207 aa)) folds into the MCM domain. Positions 391, 392, 393, 394, 395, and 496 each coordinate ATP. An Arginine finger motif is present at residues 520 to 523 (SRFD). Residues Arg611 and Glu614 each coordinate ADP.

Belongs to the MCM family. In terms of assembly, component of the Mcm2-7 complex. The complex forms a toroidal hexameric ring with the proposed subunit order Mcm2-Mcm6-Mcm4-Mcm7-Mcm3-Mcm5. The heterodimers of Mcm4/Mcm6 and Mcm3/Mcm5 interact with Mcm2 and Mcm7. In terms of tissue distribution, in stage 12 embryos, strongly expressed in the CNS and weakly in the gut.

It localises to the nucleus. It catalyses the reaction ATP + H2O = ADP + phosphate + H(+). In terms of biological role, acts as a component of the Mcm2-7 complex (Mcm complex) which is the putative replicative helicase essential for 'once per cell cycle' DNA replication initiation and elongation in eukaryotic cells. Core component of CDC45-MCM-GINS (CMG) helicase, the molecular machine that unwinds template DNA during replication, and around which the replisome is built. The active ATPase sites in the Mcm2-7 ring are formed through the interaction surfaces of two neighboring subunits such that a critical structure of a conserved arginine finger motif is provided in trans relative to the ATP-binding site of the Walker A box of the adjacent subunit. The six ATPase active sites, however, are likely to contribute differentially to the complex helicase activity Required for DNA replication and cell proliferation. Required for mitotic cycles, endocycles, and the special S phase associated with the amplification of chorion genes; has a role in origin unwinding or fork elongation at chorion loci. The sequence is that of DNA replication licensing factor Mcm6 from Drosophila melanogaster (Fruit fly).